Consider the following 216-residue polypeptide: Pyridoxine/pyridoxamine 5'-phosphate oxidase (216 aa).

Substrate contacts are provided by residues 12–15 (RREY) and lysine 70. Residues 65-70 (RLVLLK), 80-81 (YT), arginine 86, lysine 87, and glutamine 109 contribute to the FMN site. Residues tyrosine 127, arginine 131, and serine 135 each coordinate substrate. FMN contacts are provided by residues 144 to 145 (QS) and tryptophan 189. 195 to 197 (RLH) provides a ligand contact to substrate. Arginine 199 serves as a coordination point for FMN.

This sequence belongs to the pyridoxamine 5'-phosphate oxidase family. As to quaternary structure, homodimer. It depends on FMN as a cofactor.

The catalysed reaction is pyridoxamine 5'-phosphate + O2 + H2O = pyridoxal 5'-phosphate + H2O2 + NH4(+). It catalyses the reaction pyridoxine 5'-phosphate + O2 = pyridoxal 5'-phosphate + H2O2. Its pathway is cofactor metabolism; pyridoxal 5'-phosphate salvage; pyridoxal 5'-phosphate from pyridoxamine 5'-phosphate: step 1/1. The protein operates within cofactor metabolism; pyridoxal 5'-phosphate salvage; pyridoxal 5'-phosphate from pyridoxine 5'-phosphate: step 1/1. Functionally, catalyzes the oxidation of either pyridoxine 5'-phosphate (PNP) or pyridoxamine 5'-phosphate (PMP) into pyridoxal 5'-phosphate (PLP). The polypeptide is Pyridoxine/pyridoxamine 5'-phosphate oxidase (Baumannia cicadellinicola subsp. Homalodisca coagulata).